The chain runs to 579 residues: Peptidoglycan D,D-transpeptidase FtsI (579 aa).

A helical membrane pass occupies residues 15–35 (FCVIVGLLLAMVGAIVWRIVD). Ser294 acts as the Acyl-ester intermediate in catalysis. Positions 558 to 579 (DNLPTATEQQQVNAAPAKGGRG) are disordered. Residues 561-570 (PTATEQQQVN) show a composition bias toward polar residues.

This sequence belongs to the transpeptidase family. FtsI subfamily.

The protein resides in the cell inner membrane. It catalyses the reaction Preferential cleavage: (Ac)2-L-Lys-D-Ala-|-D-Ala. Also transpeptidation of peptidyl-alanyl moieties that are N-acyl substituents of D-alanine.. Its pathway is cell wall biogenesis; peptidoglycan biosynthesis. Its function is as follows. Catalyzes cross-linking of the peptidoglycan cell wall at the division septum. Binds penicillin. The sequence is that of Peptidoglycan D,D-transpeptidase FtsI from Pseudomonas aeruginosa (strain ATCC 15692 / DSM 22644 / CIP 104116 / JCM 14847 / LMG 12228 / 1C / PRS 101 / PAO1).